We begin with the raw amino-acid sequence, 152 residues long: Ubiquitin-conjugating enzyme E2 2 (152 aa).

Positions 4–150 (PARKRLMRDF…VREVVEQSWT (147 aa)) constitute a UBC core domain. Cysteine 88 functions as the Glycyl thioester intermediate in the catalytic mechanism.

It belongs to the ubiquitin-conjugating enzyme family. In terms of tissue distribution, expressed in all tissues examined. Lower levels found in leaves.

It catalyses the reaction S-ubiquitinyl-[E1 ubiquitin-activating enzyme]-L-cysteine + [E2 ubiquitin-conjugating enzyme]-L-cysteine = [E1 ubiquitin-activating enzyme]-L-cysteine + S-ubiquitinyl-[E2 ubiquitin-conjugating enzyme]-L-cysteine.. The protein operates within protein modification; protein ubiquitination. Its function is as follows. Accepts the ubiquitin from the E1 complex and catalyzes its covalent attachment to other proteins. This chain is Ubiquitin-conjugating enzyme E2 2 (UBC2), found in Arabidopsis thaliana (Mouse-ear cress).